Consider the following 491-residue polypeptide: Putative pentatricopeptide repeat-containing protein At1g02420 (491 aa).

PPR repeat units lie at residues 179-209 (DTAC…LKHQ), 210-244 (FQPD…GLKP), 245-279 (DVVT…EETP), 280-314 (DVIT…GCYP), 315-349 (DVAA…GLSP), 350-384 (NATT…ECLP), 385-419 (NTQS…GFGS), and 420-454 (YSLV…GHRP).

The protein belongs to the PPR family. P subfamily.

In Arabidopsis thaliana (Mouse-ear cress), this protein is Putative pentatricopeptide repeat-containing protein At1g02420.